Reading from the N-terminus, the 391-residue chain is Somatostatin receptor type 1 (391 aa).

Residues 1–50 are disordered; the sequence is MFPNGTASSPSSSPSPSPGSCGEGACSRGPGSGAADGMEEPGRNASQNGT. At 1–56 the chain is on the extracellular side; that stretch reads MFPNGTASSPSSSPSPSPGSCGEGACSRGPGSGAADGMEEPGRNASQNGTLSEGQG. An N-linked (GlcNAc...) asparagine glycan is attached at Asn-4. Over residues 8 to 20 the composition is skewed to low complexity; sequence SSPSSSPSPSPGS. N-linked (GlcNAc...) asparagine glycosylation is found at Asn-44 and Asn-48. The helical transmembrane segment at 57–84 threads the bilayer; the sequence is SAILISFIYSVVCLVGLCGNSMVIYVIL. Residues 85–94 lie on the Cytoplasmic side of the membrane; sequence RYAKMKTATN. Residues 95–120 form a helical membrane-spanning segment; sequence IYILNLAIADELLMLSVPFLVTSTLL. The Extracellular segment spans residues 121–131; sequence RHWPFGALLCR. A disulfide bridge links Cys-130 with Cys-208. The chain crosses the membrane as a helical span at residues 132 to 153; sequence LVLSVDAVNMFTSIYCLTVLSV. Residues 154–175 are Cytoplasmic-facing; it reads DRYVAVVHPIKAARYRRPTVAK. A helical transmembrane segment spans residues 176-196; it reads VVNLGVWVLSLLVILPIVVFS. Residues 197–219 lie on the Extracellular side of the membrane; that stretch reads RTAANSDGTVACNMLMPEPAQRW. The chain crosses the membrane as a helical span at residues 220-244; that stretch reads LVGFVLYTFLMGFLLPVGAICLCYV. At 245 to 270 the chain is on the cytoplasmic side; sequence LIIAKMRMVALKAGWQQRKRSERKIT. The chain crosses the membrane as a helical span at residues 271 to 296; the sequence is LMVMMVVMVFVICWMPFYVVQLVNVF. The Extracellular portion of the chain corresponds to 297–303; that stretch reads AEQDDAT. A helical membrane pass occupies residues 304-327; sequence VSQLSVILGYANSCANPILYGFLS. The Cytoplasmic portion of the chain corresponds to 328-391; sequence DNFKRSFQRI…GTCASRISTL (64 aa). Cys-339 is lipidated: S-palmitoyl cysteine.

Belongs to the G-protein coupled receptor 1 family. As to expression, jejunum and stomach.

The protein localises to the cell membrane. Functionally, receptor for somatostatin with higher affinity for somatostatin-14 than -28. This receptor is coupled via pertussis toxin sensitive G proteins to inhibition of adenylyl cyclase. In addition it stimulates phosphotyrosine phosphatase and Na(+)/H(+) exchanger via pertussis toxin insensitive G proteins. The sequence is that of Somatostatin receptor type 1 (Sstr1) from Mus musculus (Mouse).